Reading from the N-terminus, the 264-residue chain is Acetylglutamate kinase (264 aa).

Residues 40-41, Arg62, and Asn158 contribute to the substrate site; that span reads GG.

This sequence belongs to the acetylglutamate kinase family. ArgB subfamily.

It is found in the cytoplasm. It carries out the reaction N-acetyl-L-glutamate + ATP = N-acetyl-L-glutamyl 5-phosphate + ADP. It functions in the pathway amino-acid biosynthesis; L-arginine biosynthesis; N(2)-acetyl-L-ornithine from L-glutamate: step 2/4. Functionally, catalyzes the ATP-dependent phosphorylation of N-acetyl-L-glutamate. This is Acetylglutamate kinase from Cytophaga hutchinsonii (strain ATCC 33406 / DSM 1761 / CIP 103989 / NBRC 15051 / NCIMB 9469 / D465).